The primary structure comprises 92 residues: uncharacterized protein (92 aa).

This is an uncharacterized protein from Saccharomyces cerevisiae (strain ATCC 204508 / S288c) (Baker's yeast).